We begin with the raw amino-acid sequence, 408 residues long: Potassium channel subfamily K member 13 (408 aa).

Residues 1–19 are Cytoplasmic-facing; that stretch reads MAGRGFSWGPGHLNEDNAR. Residues 20 to 40 form a helical membrane-spanning segment; that stretch reads FLLLAALIVLYLLGGAAVFSA. N-linked (GlcNAc...) asparagine glycans are attached at residues N59 and N65. Residues 95–115 constitute an intramembrane region (pore-forming); sequence WDFTGAFYFVGTVVSTIGFGM. Positions 110, 111, and 112 each coordinate K(+). Residues 110–115 form a selectivity filter 1 region; the sequence is TIGFGM. A helical membrane pass occupies residues 125–145; it reads IFLIFYGLVGCSSTILFFNLF. At 146-193 the chain is on the cytoplasmic side; it reads LERLITIIAYIMKSCHQRQLRRRGALPQESLKDAGQCEVDSLAGWKPS. Residues 194-214 traverse the membrane as a helical segment; it reads VYYVMLILCTASILISCCASA. An intramembrane region (pore-forming) is located at residues 224 to 244; the sequence is YFDSLYFCFVAFSTIGFGDLV. The K(+) site is built by T237, I238, G239, and F240. Residues 237–242 form a selectivity filter 2 region; the sequence is TIGFGD. The helical transmembrane segment at 263-283 threads the bilayer; sequence VFILMGVCCIYSLFNVISILI. Over 284–408 the chain is Cytoplasmic; it reads KQSLNWILRK…NRLAETSGDR (125 aa).

This sequence belongs to the two pore domain potassium channel (TC 1.A.1.8) family. Homodimer. Heterodimer with KCNK12. Expressed in microglia (at protein level).

The protein localises to the cell membrane. The enzyme catalyses K(+)(in) = K(+)(out). With respect to regulation, the channel conductance is activated by arachidonic acid and inhibited by Ba(2+) ions, volatile anesthetics such as halothane and antiarrhythmic drugs mexiletine and lidocaine. Insensitive to extracellular pH change. Its function is as follows. K(+) channel that conducts outward rectifying tonic currents potentiated by purinergic signals. Homo- and heterodimerizes to form functional channels with distinct regulatory and gating properties. Contributes most of K(+) currents at the plasma membrane of resting microglia. Maintains a depolarized membrane potential required for proper ramified microglia morphology and phagocytosis, selectively mediating microglial pruning of presynaptic compartments at hippocampal excitatory synapses. Upon local release of ATP caused by neuronal injury or infection, it is potentiated by P2RY12 and P2RX7 receptor signaling and contributes to ATP-triggered K(+) efflux underlying microglial NLRP3 inflammasome assembly and IL1B release. This chain is Potassium channel subfamily K member 13, found in Homo sapiens (Human).